The sequence spans 486 residues: Glutamyl-tRNA(Gln) amidotransferase subunit A (486 aa).

Active-site charge relay system residues include K78 and S153. S177 serves as the catalytic Acyl-ester intermediate.

Belongs to the amidase family. GatA subfamily. As to quaternary structure, heterotrimer of A, B and C subunits.

The catalysed reaction is L-glutamyl-tRNA(Gln) + L-glutamine + ATP + H2O = L-glutaminyl-tRNA(Gln) + L-glutamate + ADP + phosphate + H(+). In terms of biological role, allows the formation of correctly charged Gln-tRNA(Gln) through the transamidation of misacylated Glu-tRNA(Gln) in organisms which lack glutaminyl-tRNA synthetase. The reaction takes place in the presence of glutamine and ATP through an activated gamma-phospho-Glu-tRNA(Gln). The sequence is that of Glutamyl-tRNA(Gln) amidotransferase subunit A from Desulfosudis oleivorans (strain DSM 6200 / JCM 39069 / Hxd3) (Desulfococcus oleovorans).